Consider the following 384-residue polypeptide: N-acetyldiaminopimelate deacetylase (384 aa).

Asp-74 is an active-site residue. The active-site Proton acceptor is the Glu-133.

The protein belongs to the peptidase M20A family. N-acetyldiaminopimelate deacetylase subfamily.

The catalysed reaction is N-acetyl-(2S,6S)-2,6-diaminopimelate + H2O = (2S,6S)-2,6-diaminopimelate + acetate. Its pathway is amino-acid biosynthesis; L-lysine biosynthesis via DAP pathway; LL-2,6-diaminopimelate from (S)-tetrahydrodipicolinate (acetylase route): step 3/3. In terms of biological role, catalyzes the conversion of N-acetyl-diaminopimelate to diaminopimelate and acetate. The sequence is that of N-acetyldiaminopimelate deacetylase from Leuconostoc mesenteroides subsp. mesenteroides (strain ATCC 8293 / DSM 20343 / BCRC 11652 / CCM 1803 / JCM 6124 / NCDO 523 / NBRC 100496 / NCIMB 8023 / NCTC 12954 / NRRL B-1118 / 37Y).